The sequence spans 951 residues: Serine/threonine-protein phosphatase 4 regulatory subunit 1 (951 aa).

8 HEAT repeats span residues 26–63 (ESDVIIIPSALDFVSQDEMLTPLGRLDKYAASENVFNR), 65–81 (MVARSLLDTLREVCDDE), 82–119 (RDCIAVLERISRLADDSEPTVRAELMEQVPHIALFCQE), 127–164 (AFSKYLLPIVVRYLADQNNQVRKTSQAALLALLEQELI), 168–206 (DVETKVCPVLIDLTAPDSNDDVKTEAVAIMCKMAPMVGK), 208–246 (ITERLILPRFCEMCCDCRMFHVRKVCAANFGDICSVVGQ), 248–285 (ATEEMLLPRFFQLCSDNVWGVRKACAECFMAVSCATCQ), and 287–324 (IRRTKLSALFINLISDPSRWVRQAAFQSLGPFISTFAN). Disordered regions lie at residues 325–377 (PSSS…HSSA), 411–451 (SESP…PLDQ), and 474–499 (QQDPEERLSPERTGDVPAAPLPGPPN). Basic and acidic residues predominate over residues 332–365 (FKDESKSSEDSSAEDKDRMRDNDVVEEEHRRPED). 2 stretches are compositionally biased toward polar residues: residues 411–421 (SESPQEAASND) and 430–445 (NSKSASRPDAGTSSPE). A compositionally biased stretch (basic and acidic residues) spans 474 to 487 (QQDPEERLSPERTG). An HEAT 9 repeat occupies 506–543 (KELEEMIENLEPHMDDPDVKAQVDVLSAALRASSLDAH). The interval 590–612 (DYVHGGADVSPGDGFSPDEDRRP) is disordered. HEAT repeat units follow at residues 699–735 (LTAADLVPIFNGFLKDLDEVRIGVLKHLHDFLKLLHI), 800–838 (WISYKLVSEMVKKLHTATPPTFGVDLINELVENFGRCPK), and 862–899 (QFAVHLMPHLLTLANDRVPNVRVLLAKTLRQTLLEKEY). S936 carries the post-translational modification Phosphoserine.

As to quaternary structure, serine/threonine-protein phosphatase 4 (PP4) occurs in different assemblies of the catalytic and one or more regulatory subunits. Component of the PP4 complex PPP4C-PPP4R1. Interacts with HDAC3.

Functionally, regulatory subunit of serine/threonine-protein phosphatase 4. May play a role in regulation of cell division in renal glomeruli. The PPP4C-PPP4R1 PP4 complex may play a role in dephosphorylation and regulation of HDAC3. Plays a role in the inhibition of TNF-induced NF-kappa-B activation by regulating the dephosphorylation of TRAF2. The polypeptide is Serine/threonine-protein phosphatase 4 regulatory subunit 1 (Ppp4r1) (Mus musculus (Mouse)).